A 160-amino-acid polypeptide reads, in one-letter code: Small ribosomal subunit protein uS7 (160 aa).

This sequence belongs to the universal ribosomal protein uS7 family. In terms of assembly, part of the 30S ribosomal subunit. Contacts proteins S9 and S11.

In terms of biological role, one of the primary rRNA binding proteins, it binds directly to 16S rRNA where it nucleates assembly of the head domain of the 30S subunit. Is located at the subunit interface close to the decoding center, probably blocks exit of the E-site tRNA. This is Small ribosomal subunit protein uS7 from Hydrogenobaculum sp. (strain Y04AAS1).